The sequence spans 480 residues: Protein nucleotidyltransferase YdiU (480 aa).

ATP contacts are provided by glycine 86, glycine 88, arginine 89, lysine 109, aspartate 121, glycine 122, arginine 172, and arginine 179. Aspartate 248 (proton acceptor) is an active-site residue. 2 residues coordinate Mg(2+): asparagine 249 and aspartate 258. Aspartate 258 lines the ATP pocket.

Belongs to the SELO family. It depends on Mg(2+) as a cofactor. Mn(2+) serves as cofactor.

It catalyses the reaction L-seryl-[protein] + ATP = 3-O-(5'-adenylyl)-L-seryl-[protein] + diphosphate. The enzyme catalyses L-threonyl-[protein] + ATP = 3-O-(5'-adenylyl)-L-threonyl-[protein] + diphosphate. The catalysed reaction is L-tyrosyl-[protein] + ATP = O-(5'-adenylyl)-L-tyrosyl-[protein] + diphosphate. It carries out the reaction L-histidyl-[protein] + UTP = N(tele)-(5'-uridylyl)-L-histidyl-[protein] + diphosphate. It catalyses the reaction L-seryl-[protein] + UTP = O-(5'-uridylyl)-L-seryl-[protein] + diphosphate. The enzyme catalyses L-tyrosyl-[protein] + UTP = O-(5'-uridylyl)-L-tyrosyl-[protein] + diphosphate. Functionally, nucleotidyltransferase involved in the post-translational modification of proteins. It can catalyze the addition of adenosine monophosphate (AMP) or uridine monophosphate (UMP) to a protein, resulting in modifications known as AMPylation and UMPylation. This Salmonella enteritidis PT4 (strain P125109) protein is Protein nucleotidyltransferase YdiU.